The sequence spans 403 residues: S-adenosylmethionine synthase (403 aa).

An ATP-binding site is contributed by histidine 17. Residue aspartate 19 coordinates Mg(2+). Glutamate 45 is a binding site for K(+). L-methionine is bound by residues glutamate 58 and glutamine 104. A flexible loop region spans residues 104 to 114 (QSPDIAQGVDT). ATP is bound by residues 179-181 (DGK), 250-251 (KF), aspartate 259, 265-266 (RK), alanine 282, and lysine 286. Aspartate 259 contacts L-methionine. Lysine 290 contributes to the L-methionine binding site.

Belongs to the AdoMet synthase family. Homotetramer; dimer of dimers. Mg(2+) is required as a cofactor. It depends on K(+) as a cofactor.

The protein localises to the cytoplasm. The catalysed reaction is L-methionine + ATP + H2O = S-adenosyl-L-methionine + phosphate + diphosphate. It participates in amino-acid biosynthesis; S-adenosyl-L-methionine biosynthesis; S-adenosyl-L-methionine from L-methionine: step 1/1. Functionally, catalyzes the formation of S-adenosylmethionine (AdoMet) from methionine and ATP. The overall synthetic reaction is composed of two sequential steps, AdoMet formation and the subsequent tripolyphosphate hydrolysis which occurs prior to release of AdoMet from the enzyme. This is S-adenosylmethionine synthase from Mycolicibacterium paratuberculosis (strain ATCC BAA-968 / K-10) (Mycobacterium paratuberculosis).